Reading from the N-terminus, the 715-residue chain is Harpin secretion protein HrpI (715 aa).

Helical transmembrane passes span 23–43 (GAAI…TGLI), 45–65 (VLIA…MYLP), 69–89 (AFST…ALSI), 115–135 (GNLA…FLVI), 203–223 (AIAG…IGVL), 241–261 (IGDG…AGMI), and 298–318 (MLGF…ISAI).

Belongs to the FHIPEP (flagella/HR/invasion proteins export pore) family.

It localises to the cell inner membrane. Functionally, involved in the secretion of harpin; a proteinaceous elicitor of the hypersensitivity response in plants. This chain is Harpin secretion protein HrpI (hrpI), found in Erwinia amylovora (Fire blight bacteria).